Reading from the N-terminus, the 548-residue chain is Chaperonin GroEL (548 aa).

ATP contacts are provided by residues 30–33 (TLGP), K51, 87–91 (DGTTT), G415, 479–481 (NAA), and D495. The disordered stretch occupies residues 526-548 (KEDKSSDLGSAPAGGMGGMGGMM). The span at 537–548 (PAGGMGGMGGMM) shows a compositional bias: gly residues.

It belongs to the chaperonin (HSP60) family. As to quaternary structure, forms a cylinder of 14 subunits composed of two heptameric rings stacked back-to-back. Interacts with the co-chaperonin GroES.

Its subcellular location is the cytoplasm. It carries out the reaction ATP + H2O + a folded polypeptide = ADP + phosphate + an unfolded polypeptide.. In terms of biological role, together with its co-chaperonin GroES, plays an essential role in assisting protein folding. The GroEL-GroES system forms a nano-cage that allows encapsulation of the non-native substrate proteins and provides a physical environment optimized to promote and accelerate protein folding. The protein is Chaperonin GroEL of Buchnera aphidicola subsp. Pterocomma populeum.